The primary structure comprises 588 residues: Arginine--tRNA ligase (588 aa).

Residues 129–139 (PNIAKEMHVGH) carry the 'HIGH' region motif.

Belongs to the class-I aminoacyl-tRNA synthetase family. Monomer.

The protein resides in the cytoplasm. The catalysed reaction is tRNA(Arg) + L-arginine + ATP = L-arginyl-tRNA(Arg) + AMP + diphosphate. The polypeptide is Arginine--tRNA ligase (Frankia casuarinae (strain DSM 45818 / CECT 9043 / HFP020203 / CcI3)).